Here is a 199-residue protein sequence, read N- to C-terminus: Large ribosomal subunit protein eL13A (199 aa).

Residues threonine 144 and threonine 152 each carry the phosphothreonine modification.

This sequence belongs to the eukaryotic ribosomal protein eL13 family. Component of the large ribosomal subunit (LSU). Mature yeast ribosomes consist of a small (40S) and a large (60S) subunit. The 40S small subunit contains 1 molecule of ribosomal RNA (18S rRNA) and 33 different proteins (encoded by 57 genes). The large 60S subunit contains 3 rRNA molecules (25S, 5.8S and 5S rRNA) and 46 different proteins (encoded by 81 genes).

The protein resides in the cytoplasm. Its function is as follows. Component of the ribosome, a large ribonucleoprotein complex responsible for the synthesis of proteins in the cell. The small ribosomal subunit (SSU) binds messenger RNAs (mRNAs) and translates the encoded message by selecting cognate aminoacyl-transfer RNA (tRNA) molecules. The large subunit (LSU) contains the ribosomal catalytic site termed the peptidyl transferase center (PTC), which catalyzes the formation of peptide bonds, thereby polymerizing the amino acids delivered by tRNAs into a polypeptide chain. The nascent polypeptides leave the ribosome through a tunnel in the LSU and interact with protein factors that function in enzymatic processing, targeting, and the membrane insertion of nascent chains at the exit of the ribosomal tunnel. In Saccharomyces cerevisiae (strain ATCC 204508 / S288c) (Baker's yeast), this protein is Large ribosomal subunit protein eL13A.